The following is a 369-amino-acid chain: MAENSLLGKLDGLVSRFEEVGTLITDPAVIADMKRFVKLNKEYRDLEKIVGARSEYVKVLNGIEEAKALLESEQDPEMREMAREELDTCNERIPALEEEIKLLLVPADPQDDKNAIVEIRGGTGGDEAALFAGDLYRMYVKYCELKGWKISVSSFSEGSSGGFKEIIFTVSGEKVYGTLKYESGVHRVQRVPATETQGRVHTSAATVAVLPEADEFDVEINEGEIKWDTFRSGGAGGQNVNKVESGVRLRYVWKNPITGVSEEILIECTETRDQPKNKERALTRLRSFIYDKEHQKYLDDIASKRKTMVSTGDRSAKIRTYNYPQGRITDHRINYTIYNLSAFMDGEIQDCLDHLIVAENAERLKESEL.

Position 238 is an N5-methylglutamine (glutamine 238).

The protein belongs to the prokaryotic/mitochondrial release factor family. Post-translationally, methylated by PrmC. Methylation increases the termination efficiency of RF1.

It is found in the cytoplasm. In terms of biological role, peptide chain release factor 1 directs the termination of translation in response to the peptide chain termination codons UAG and UAA. The sequence is that of Peptide chain release factor 1 from Parabacteroides distasonis (strain ATCC 8503 / DSM 20701 / CIP 104284 / JCM 5825 / NCTC 11152).